The chain runs to 396 residues: Obg-like ATPase 1 (396 aa).

Residues 23 to 283 (LKIGIVGLPN…LSAEERQKYL (261 aa)) form the OBG-type G domain. 32-37 (NVGKST) serves as a coordination point for ATP. Positions 36 and 56 each coordinate Mg(2+). Leu-231 serves as a coordination point for ATP. The Nuclear export signal signature appears at 267-274 (LELKLQEL). Lys-294 is subject to N6-acetyllysine. A TGS domain is found at 304-387 (QLEYFFTAGP…EDGDIIFFKF (84 aa)).

The protein belongs to the TRAFAC class OBG-HflX-like GTPase superfamily. OBG GTPase family. YchF/OLA1 subfamily. In terms of assembly, monomer. Mg(2+) serves as cofactor.

Its subcellular location is the cytoplasm. The protein resides in the nucleus. The protein localises to the nucleolus. Its function is as follows. Hydrolyzes ATP, and can also hydrolyze GTP with lower efficiency. Has lower affinity for GTP. In Pongo abelii (Sumatran orangutan), this protein is Obg-like ATPase 1.